A 72-amino-acid chain; its full sequence is UPF0729 protein C18orf32 homolog (72 aa).

Residues 1–33 (MVCIPCIVIPVLLWIFKKFLEPYIYPVVSRIWP) are necessary for its localzation to the endoplasmic reticulum and lipid droplets. A disordered region spans residues 45–72 (TGKVDCKGADTNGFSTKGPTEVSDKKKD).

This sequence belongs to the UPF0729 family. Interacts with DERL1 and AMFR. Undergoes ER-associated degradation (ERAD).

The protein localises to the endoplasmic reticulum. It is found in the lipid droplet. Functionally, may activate the NF-kappa-B signaling pathway. This chain is UPF0729 protein C18orf32 homolog, found in Rattus norvegicus (Rat).